The sequence spans 607 residues: UvrABC system protein C (607 aa).

Positions 16-94 (GRPGVYRMFD…IKEWRPPYNI (79 aa)) constitute a GIY-YIG domain. In terms of domain architecture, UVR spans 203 to 238 (NALTDELSTAMEAAASTLDFEKAAELRDQISLLRRV).

Belongs to the UvrC family. In terms of assembly, interacts with UvrB in an incision complex.

It is found in the cytoplasm. In terms of biological role, the UvrABC repair system catalyzes the recognition and processing of DNA lesions. UvrC both incises the 5' and 3' sides of the lesion. The N-terminal half is responsible for the 3' incision and the C-terminal half is responsible for the 5' incision. The polypeptide is UvrABC system protein C (Pseudomonas fluorescens (strain ATCC BAA-477 / NRRL B-23932 / Pf-5)).